The following is a 194-amino-acid chain: Dof zinc finger protein DOF4.2 (194 aa).

The segment at 21–75 (RVCPRCYSDQTRFSYFNNNKKSQPRYKCKNCCRCWTHGGVLRNIPVTGICDKSNL) adopts a Dof-type zinc-finger fold. Zn(2+)-binding residues include cysteine 23, cysteine 26, cysteine 48, and cysteine 51.

Its subcellular location is the nucleus. Transcription factor that binds specifically to a 5'-AA[AG]G-3' consensus core sequence. The polypeptide is Dof zinc finger protein DOF4.2 (DOF4.2) (Arabidopsis thaliana (Mouse-ear cress)).